We begin with the raw amino-acid sequence, 1127 residues long: Elongation factor-like GTPase 1 (1127 aa).

The 256-residue stretch at 17–272 (ANIRNICVLA…LLKTLWGDYY (256 aa)) folds into the tr-type G domain. GTP contacts are provided by residues 26–33 (AHVDHGKT), 92–96 (DSPGH), and 146–149 (NKID). The interval 429–496 (KPRPLTQEEM…VASVSRQPVS (68 aa)) is disordered. 2 stretches are compositionally biased toward basic and acidic residues: residues 438 to 452 (MAQRRERARQRHAEK) and 474 to 484 (SPHEDEPRGDE). Lys528 bears the N6-acetyllysine mark.

This sequence belongs to the TRAFAC class translation factor GTPase superfamily. Classic translation factor GTPase family. Associates with the 60S ribosomal subunit. Found in a complex consisting of the 60S ribosomal subunit, SBDS and EFL1.

The enzyme catalyses GTP + H2O = GDP + phosphate + H(+). With respect to regulation, GTPase activity is stimulated in the presence of 60S ribosome subunits. Functionally, GTPase involved in the biogenesis of the 60S ribosomal subunit and translational activation of ribosomes. Together with SBDS, triggers the GTP-dependent release of EIF6 from 60S pre-ribosomes in the cytoplasm, thereby activating ribosomes for translation competence by allowing 80S ribosome assembly and facilitating EIF6 recycling to the nucleus, where it is required for 60S rRNA processing and nuclear export. The sequence is that of Elongation factor-like GTPase 1 (Efl1) from Mus musculus (Mouse).